Reading from the N-terminus, the 2176-residue chain is Nipped-B-like protein scc-2 (2176 aa).

Over residues 1–25 (MDPNNLQNSLNGTGNPNFQPVQTNA) the composition is skewed to polar residues. 7 disordered regions span residues 1–27 (MDPN…NAGG), 150–170 (PIPQ…QIQS), 464–483 (SEAT…DEEG), 495–514 (MMSV…NQRK), 523–551 (YDSL…DDED), 585–615 (QHFF…IESR), and 669–708 (DSLD…EMDE). Residues 464–473 (SEATQSSSVT) are compositionally biased toward low complexity. 2 stretches are compositionally biased toward basic and acidic residues: residues 597 to 615 (EDRI…IESR) and 685 to 695 (SGGDHHHKGDE). The span at 696 to 708 (NSDESDEEEEMDE) shows a compositional bias: acidic residues. 7 HEAT repeats span residues 1280 to 1312 (DTYL…IIEA), 1320 to 1351 (EDVQ…FVLY), 1353 to 1388 (EEYV…ICEK), 1393 to 1426 (EMIP…LWFQ), 1692 to 1723 (EKVF…FCAQ), 1803 to 1834 (QKYW…TLNQ), and 1840 to 1871 (GASI…IDSK). A disordered region spans residues 2149 to 2176 (ITAANDDYDEEEDGGEDSRGPIMEQMEH). Residues 2154-2163 (DDYDEEEDGG) show a composition bias toward acidic residues.

It belongs to the SCC2/Nipped-B family. In terms of assembly, may heterodimerize with mau-2/SCC4 to form the cohesin loading complex.

The protein localises to the nucleus. It is found in the chromosome. Plays an important role in the loading of the cohesin complex on to meiotic chromosomes. Forms a heterodimeric complex (also known as cohesin loading complex) with mau-2/SCC4 which mediates the loading of the cohesin complex onto chromatin. Plays an essential role in cell division during embryonic development. Promotes normal chromosome organization during meiosis. Required for the assembly of the synaptonemal complex between homologous chromosomes to promote sister chromatid cohesion during meiosis. Required for chromosome segregation during mitosis and meiosis. Plays a role in DNA double-strand break (DSB) repair during meiotic recombination and promotes the assembly of the 9-1-1 cell-cycle checkpoint response complex which is required for inducing apoptosis in response to DNA damage, at DNA damage sites. The polypeptide is Nipped-B-like protein scc-2 (Caenorhabditis elegans).